A 72-amino-acid polypeptide reads, in one-letter code: Large ribosomal subunit protein uL29 (72 aa).

It belongs to the universal ribosomal protein uL29 family.

This chain is Large ribosomal subunit protein uL29, found in Caldicellulosiruptor bescii (strain ATCC BAA-1888 / DSM 6725 / KCTC 15123 / Z-1320) (Anaerocellum thermophilum).